We begin with the raw amino-acid sequence, 131 residues long: Large ribosomal subunit protein bL19 (131 aa).

This sequence belongs to the bacterial ribosomal protein bL19 family.

Functionally, this protein is located at the 30S-50S ribosomal subunit interface and may play a role in the structure and function of the aminoacyl-tRNA binding site. This Polynucleobacter necessarius subsp. necessarius (strain STIR1) protein is Large ribosomal subunit protein bL19.